The sequence spans 5289 residues: Mucin-2 (5289 aa).

Positions 1-20 (MGLPLARLAAVCLALSLAGG) are cleaved as a signal peptide. Ser-21 is subject to Phosphoserine. His-34 is a binding site for Cu(2+). Residues 35-207 (NVCSTWGNFH…KINQPDVVCE (173 aa)) form the VWFD 1 domain. 29 cysteine pairs are disulfide-bonded: Cys-37/Cys-169, Cys-59/Cys-206, Cys-67/Cys-166, Cys-218/Cys-255, Cys-225/Cys-250, Cys-237/Cys-275, Cys-257/Cys-263, Cys-265/Cys-291, Cys-295/Cys-329, Cys-308/Cys-321, Cys-312/Cys-351, Cys-331/Cys-345, Cys-353/Cys-375, Cys-370/Cys-387, Cys-373/Cys-382, Cys-391/Cys-528, Cys-413/Cys-563, Cys-435/Cys-443, Cys-574/Cys-619, Cys-588/Cys-614, Cys-601/Cys-639, Cys-621/Cys-627, Cys-629/Cys-654, Cys-661/Cys-698, Cys-674/Cys-688, Cys-678/Cys-718, Cys-700/Cys-712, Cys-720/Cys-742, and Cys-740/Cys-749. Asp-49 lines the Ca(2+) pocket. Positions 146 and 154 each coordinate Cu(+). Glu-156 serves as a coordination point for Cu(2+). N-linked (GlcNAc...) asparagine glycosylation occurs at Asn-163. Positions 171, 173, 175, and 180 each coordinate Ca(2+). Cu(2+) is bound at residue His-277. The TIL domain occupies 295–351 (CPGNLVYLESGSPCMDTCSHLEVSSLCEEHRMDGCFCPEGTVYDDIGDSGCVPVSQC). Cu(2+) is bound at residue His-324. Met-326 is a Cu(+) binding site. The VWFD 2 domain occupies 389-564 (GTCALEGGSH…NTWKAQSSCH (176 aa)). A Ca(2+)-binding site is contributed by Asp-403. A glycan (N-linked (GlcNAc...) asparagine) is linked at Asn-423. Residues Asn-530, Asn-532, Leu-534, Asp-537, and Asp-538 each contribute to the Ca(2+) site. Residue Asn-670 is glycosylated (N-linked (GlcNAc...) asparagine). Residue Asn-770 is glycosylated (N-linked (GlcNAc...) asparagine). Cystine bridges form between Cys-784/Cys-820, Cys-802/Cys-814, Cys-822/Cys-844, Cys-839/Cys-856, Cys-842/Cys-851, Cys-860/Cys-992, Cys-882/Cys-1027, Cys-891/Cys-989, Cys-909/Cys-916, Cys-1037/Cys-1080, Cys-1051/Cys-1075, Cys-1062/Cys-1102, Cys-1082/Cys-1090, Cys-1092/Cys-1117, Cys-1108/Cys-1137, Cys-1121/Cys-1163, Cys-1145/Cys-1187, Cys-1167/Cys-1181, Cys-1189/Cys-1213, Cys-1208/Cys-1238, and Cys-1211/Cys-1221. The 171-residue stretch at 858–1028 (GTCSIYGSGH…NSWKEAPTCP (171 aa)) folds into the VWFD 3 domain. Asp-872 contacts Ca(2+). N-linked (GlcNAc...) asparagine glycosylation is present at Asn-894. Ca(2+) contacts are provided by Asn-994, Asp-996, Arg-998, Asn-1001, and Asp-1002. 2 N-linked (GlcNAc...) asparagine glycosylation sites follow: Asn-1139 and Asn-1154. Asn-1215, Asn-1230, and Asn-1246 each carry an N-linked (GlcNAc...) asparagine glycan. Thr-1266, Thr-1267, Thr-1269, Thr-1270, Thr-1272, Thr-1275, Thr-1276, Thr-1281, Thr-1282, and Thr-1287 each carry an O-linked (GalNAc) threonine glycan. O-linked (GalNAc) serine glycosylation is found at Ser-1291 and Ser-1292. Thr-1293 is a glycosylation site (O-linked (GalNAc) threonine). Residue Ser-1296 is glycosylated (O-linked (GalNAc) serine). Thr-1297 carries an O-linked (GalNAc) threonine glycan. Ca(2+)-binding residues include Asn-1310, Asp-1312, His-1313, Ser-1316, Asp-1319, Gly-1321, Asp-1322, Glu-1324, Asp-1381, and Tyr-1382. Composition is skewed to pro residues over residues 1399–1411 (PSPPTTTPSPPPT), 1419–1510 (TTTP…PITP), 1520–1549 (TTTPSPPTTTTTTPPPTTTPSPPTTTPITP), 1559–1628 (TTTP…PITP), and 1638–1679 (TTTP…PPTT). The tract at residues 1399–1773 (PSPPTTTPSP…SITPPTFSPF (375 aa)) is disordered. Tandem repeats lie at residues 1401 to 1416 (PPTTTPSPPPTSTTTL), 1417 to 1432 (PPTTTPSPPTTTTTTP), 1433 to 1448 (PPTTTPSPPITTTTTP), 1449 to 1464 (PPTTTPSPPISTTTTP), 1465 to 1471 (PPTTTPS), and 1472 to 1478 (PPTTTPS). Positions 1401–1747 (PPTTTPSPPP…SPPTTTMTTL (347 aa)) are approximate repeats. The stretch at 1479 to 1494 (PPTTTPSPPTTTTTTP) is one 7A repeat. The stretch at 1495–1517 (PPTTTPSPPTTTPITPPASTTTL) is one 7B repeat. Residues 1518 to 1533 (PPTTTPSPPTTTTTTP) form an 8A repeat. Residues 1534–1556 (PPTTTPSPPTTTPITPPTSTTTL) form an 8B repeat. A 9A repeat occupies 1557–1572 (PPTTTPSPPPTTTTTP). The 9B repeat unit spans residues 1573–1596 (PPTTTPSPPTTTTPSPPTITTTTP). One copy of the 10A repeat lies at 1597-1612 (PPTTTPSPPTTTTTTP). Residues 1613–1635 (PPTTTPSPPTTTPITPPTSTTTL) form a 10B repeat. Residues 1636–1651 (PPTTTPSPPPTTTTTP) form an 11A repeat. The 11B repeat unit spans residues 1652-1675 (PPTTTPSPPTTTTPSPPITTTTTP). 5 repeat units span residues 1676–1683 (PPTTTPSS), 1684–1699 (PITTTPSPPTTTMTTP), 1700–1715 (SPTTTPSSPITTTTTP), 1716–1731 (SSTTTPSPPPTTMTTP), and 1732–1747 (SPTTTPSPPTTTMTTL). Low complexity-rich tracts occupy residues 1680–1720 (TPSS…STTT) and 1741–1759 (TTTMTTLPPTTTSSPLTTT). Residues 1760–1770 (PLPPSITPPTF) are compositionally biased toward pro residues. Asn-1787 and Asn-1820 each carry an N-linked (GlcNAc...) asparagine glycan. Low complexity-rich tracts occupy residues 1885–2158 (MTTT…TMVT), 2165–4238 (GTQT…QTPT), 4269–4315 (TTVT…STAP), and 4329–4430 (STPQ…PSII). 2 disordered regions span residues 1885 to 4238 (MTTT…QTPT) and 4269 to 4430 (TTVT…PSII). N-linked (GlcNAc...) asparagine glycans are attached at residues Asn-4449, Asn-4461, Asn-4472, and Asn-4483. Residues 4492 to 4524 (PTPTPSKSTPTPSKPSSTPSKPTPGTKPPECPD) are disordered. Residues 4496-4511 (PSKSTPTPSKPSSTPS) are compositionally biased toward low complexity. Pro residues predominate over residues 4512–4522 (KPTPGTKPPEC). Residues Asn-4532, Asn-4548, and Asn-4612 are each glycosylated (N-linked (GlcNAc...) asparagine). Residues 4589–4772 (CYCTGWGDPH…VNDPSKPHCP (184 aa)) form the VWFD 4 domain. 3 disulfide bridges follow: Cys-4591–Cys-4732, Cys-4613–Cys-4771, and Cys-4637–Cys-4645. Asn-4726 and Asn-4737 each carry an N-linked (GlcNAc...) asparagine glycan. Residues 4770–4795 (HCPHSSSTTKRPAVTVPGGGKTTPHK) form a disordered region. Residues Asn-4862, Asn-4897, Asn-4991, Asn-4998, Asn-5065, Asn-5080, Asn-5129, Asn-5148, and Asn-5179 are each glycosylated (N-linked (GlcNAc...) asparagine). The 70-residue stretch at 4927-4996 (CVGPDNVPRE…DTCCNITVCK (70 aa)) folds into the VWFC 1 domain. One can recognise a VWFC 2 domain in the interval 5034–5101 (GVCVHGNAEY…APGECCKKCE (68 aa)). Disulfide bonds link Cys-5185-Cys-5232, Cys-5199-Cys-5246, Cys-5208-Cys-5262, and Cys-5212-Cys-5264. The region spanning 5185–5270 (CSTVPVTTEV…SCQCQDTVCG (86 aa)) is the CTCK domain.

As to quaternary structure, homomultimer; disulfide-linked. The N- and C-terminus mediate their assembly into higher order structures to form filaments. The CTCK domains of two polypeptides associate in the endoplasmic reticulum to generate intermolecularly disulfide-bonded dimers. These dimers progress to the Golgi apparatus, which is a more acidic environment than the endoplasmic reticulum. Under acidic conditions, the N-termini form non-covalent intermolecular interactions that juxtapose assemblies of the third VWD domain (VWD3) from different CTCK-linked dimers. The VWD3 assemblies then become disulfide bonded to one another to produce long, disulfide-linked polymers that remain highly compact until secretion. Interacts with FCGBP. Interacts with AGR2; disulfide-linked. (Microbial infection) Interacts in vitro with L.monocytogenes internalin proteins InlB, InlC and InlJ; for InlC binding is slightly better at pH 5.5, (the pH of the intestine) than at pH 7.4. O-glycosylated. O-glycosylation is required for mucin assembly. Goblet cells synthesize two forms of mucin that differ in branched chain O-glycosylation and the site of production in the colon. Post-translationally, may undergo proteolytic cleavage in the outer mucus layer of the colon, contributing to the expanded volume and loose nature of this layer which allows for bacterial colonization in contrast to the inner mucus layer which is dense and devoid of bacteria. In terms of processing, at low pH of 6 and under, undergoes autocatalytic cleavage in vitro in the N-terminal region of the fourth VWD domain. It is likely that this also occurs in vivo and is triggered by the low pH of the late secretory pathway. As to expression, colon, small intestine, colonic tumors, bronchus, cervix and gall bladder.

The protein localises to the secreted. In terms of biological role, coats the epithelia of the intestines and other mucus membrane-containing organs to provide a protective, lubricating barrier against particles and infectious agents at mucosal surfaces. Major constituent of the colon mucus, which is mainly formed by large polymeric networks of MUC2 secreted by goblet cells that cover the exposed surfaces of intestine. MUC2 networks form hydrogels that guard the underlying epithelium from pathogens and other hazardous matter entering from the outside world, while permitting nutrient absorption and gas exchange. Acts as a divalent copper chaperone that protects intestinal cells from copper toxicity and facilitates nutritional copper unptake into cells. Binds both Cu(2+) and its reduced form, Cu(1+), at two juxtaposed binding sites: Cu(2+), once reduced to Cu(1+) by vitamin C (ascorbate) or other dietary antioxidants, transits to the other binding site. MUC2-bound Cu(1+) is protected from oxidation in aerobic environments, and can be released for nutritional delivery to cells. Mucin gels store antimicrobial molecules that participate in innate immunity. Mucin glycoproteins also house and feed the microbiome, lubricate tissue surfaces, and may facilitate the removal of contaminants and waste products from the body. Goblet cells synthesize two forms of MUC2 mucin that differ in branched chain O-glycosylation and the site of production in the colon: a (1) 'thick' mucus that wraps the microbiota to form fecal pellets is produced in the proximal, ascending colon. 'Thick' mucus transits along the descending colon and is lubricated by a (2) 'thin' MUC2 mucus produced in the distal colon which adheres to the 'thick' mucus. The polypeptide is Mucin-2 (Homo sapiens (Human)).